Reading from the N-terminus, the 379-residue chain is UDP-N-acetylglucosamine--N-acetylmuramyl-(pentapeptide) pyrophosphoryl-undecaprenol N-acetylglucosamine transferase (379 aa).

Residues 13–15, Asn123, Arg166, Ser194, and Gln295 each bind UDP-N-acetyl-alpha-D-glucosamine; that span reads TGG.

It belongs to the glycosyltransferase 28 family. MurG subfamily.

Its subcellular location is the cell inner membrane. The enzyme catalyses di-trans,octa-cis-undecaprenyl diphospho-N-acetyl-alpha-D-muramoyl-L-alanyl-D-glutamyl-meso-2,6-diaminopimeloyl-D-alanyl-D-alanine + UDP-N-acetyl-alpha-D-glucosamine = di-trans,octa-cis-undecaprenyl diphospho-[N-acetyl-alpha-D-glucosaminyl-(1-&gt;4)]-N-acetyl-alpha-D-muramoyl-L-alanyl-D-glutamyl-meso-2,6-diaminopimeloyl-D-alanyl-D-alanine + UDP + H(+). It participates in cell wall biogenesis; peptidoglycan biosynthesis. Functionally, cell wall formation. Catalyzes the transfer of a GlcNAc subunit on undecaprenyl-pyrophosphoryl-MurNAc-pentapeptide (lipid intermediate I) to form undecaprenyl-pyrophosphoryl-MurNAc-(pentapeptide)GlcNAc (lipid intermediate II). The protein is UDP-N-acetylglucosamine--N-acetylmuramyl-(pentapeptide) pyrophosphoryl-undecaprenol N-acetylglucosamine transferase of Rhodospirillum centenum (strain ATCC 51521 / SW).